The chain runs to 567 residues: Oxygen-dependent choline dehydrogenase (567 aa).

Residue 6 to 35 (DYIIVGAGSAGNTLATRLTEDEGVTVLLLE) participates in FAD binding. The disordered stretch occupies residues 182–203 (QQEGFGPMDRTVTPKGRRASTA). Histidine 475 acts as the Proton acceptor in catalysis.

This sequence belongs to the GMC oxidoreductase family. FAD is required as a cofactor.

The enzyme catalyses choline + A = betaine aldehyde + AH2. The catalysed reaction is betaine aldehyde + NAD(+) + H2O = glycine betaine + NADH + 2 H(+). It functions in the pathway amine and polyamine biosynthesis; betaine biosynthesis via choline pathway; betaine aldehyde from choline (cytochrome c reductase route): step 1/1. In terms of biological role, involved in the biosynthesis of the osmoprotectant glycine betaine. Catalyzes the oxidation of choline to betaine aldehyde and betaine aldehyde to glycine betaine at the same rate. This chain is Oxygen-dependent choline dehydrogenase, found in Pseudomonas fluorescens (strain ATCC BAA-477 / NRRL B-23932 / Pf-5).